We begin with the raw amino-acid sequence, 200 residues long: Phospholipase A2 inhibitor gamma subunit B (200 aa).

An N-terminal signal peptide occupies residues 1-19 (MKFLLFCCLFGTFLATGMC). 8 cysteine pairs are disulfide-bonded: cysteine 22/cysteine 46, cysteine 25/cysteine 32, cysteine 39/cysteine 67, cysteine 73/cysteine 94, cysteine 95/cysteine 100, cysteine 120/cysteine 145, cysteine 138/cysteine 165, and cysteine 171/cysteine 191.

Belongs to the CNF-like-inhibitor family. As to quaternary structure, heteromer composed of subunit A and subunit B.

It is found in the secreted. Inhibits the enzymatic activity of the phospholipase A2 (PLA2). This Elaphe climacophora (Japanese rat snake) protein is Phospholipase A2 inhibitor gamma subunit B.